The primary structure comprises 809 residues: Lethal factor (809 aa).

The signal sequence occupies residues 1–33; sequence MNIKKEFIKVISMSCLVTAITLSGPVFIPLVQG. The segment at 39–66 is disordered; sequence DVGMHVKEKEKNKDENKRKDEERNKTQE. A compositionally biased stretch (basic and acidic residues) spans 40 to 66; it reads VGMHVKEKEKNKDENKRKDEERNKTQE. The segment at 60-295 is i; PA-binding region; it reads ERNKTQEEHL…NLSLEELKDQ (236 aa). The 213-residue stretch at 70–282 folds into the ATLF-like 1 domain; that stretch reads KEIMKHIVKI…AFNYMDKFNE (213 aa). Positions 296-330 are IIA; the sequence is RMLARYEKWEKIKQHYQHWSDSLSEEGRGLLKKLQ. Tandem repeats lie at residues 315-333, 342-357, 360-378, 380-397, and 399-416. The segment at 315–416 is 5 X approximate repeats; the sequence is SDSLSEEGRG…EFLKKLKLDI (102 aa). Residues 336–416 form an III region; sequence KKDDIIHSLS…EFLKKLKLDI (81 aa). The IIB stretch occupies residues 420–583; that stretch reads DINQRLQDTG…EYIRIDAKVV (164 aa). The segment at 585–809 is IV; it reads KSKIDTKIQE…NDQIKFIINS (225 aa). The ATLF-like 2 domain maps to 609 to 804; it reads LPKYTKLITF…TFQFINDQIK (196 aa). A Zn(2+)-binding site is contributed by His719. Glu720 functions as the Proton acceptor in the catalytic mechanism. Zn(2+) contacts are provided by His723, Tyr761, and Glu768.

Belongs to the peptidase M34 family. As to quaternary structure, interacts (via ATLF domain 1) with the cleaved form of protective antigen (PA-63) anthrax toxin; interaction is required for LF translocation into the host cytoplasm. Interacts with PA-63 homooligomers (either homoheptamers or homooctamers): three molecules of LF bind the PA-63 homoheptamer to form the PA(7)LF(3) complex, in which the relative position of the N-terminal alpha-helices in the three LFs determines which factor is translocated first. The cofactor is Zn(2+).

The protein localises to the secreted. Its subcellular location is the host cytoplasm. It localises to the host cytosol. The catalysed reaction is Preferred amino acids around the cleavage site can be denoted BBBBxHx-|-H, in which B denotes Arg or Lys, H denotes a hydrophobic amino acid, and x is any amino acid. The only known protein substrates are mitogen-activated protein (MAP) kinase kinases.. Inhibited by NSC-12155 (1,3-Bis(2-methyl-4-aminoquinoline-6-yl)ure). Inhibited by phenoxyacetic acid bearing alpha-benzyl substituents on the C2-side chain. Inhibited by sulfonamide hydroxamate with benzylic additions at the sulfonamide nitrogen. Also inhibited by sulfonamide hydroxamates with alkylation at the sulfonamide nitrogen. Inhibited by hydroxamic acid inhibitors. Functionally, lethal factor (LF), which constitutes one of the three proteins composing the anthrax toxin, is able to trigger rapid cell death in macrophages. Acts as a protease that cleaves the N-terminal of most dual specificity mitogen-activated protein kinase kinases (MAPKKs or MAP2Ks) (except for MAP2K5): cleavage invariably occurs within the N-terminal proline-rich region preceding the kinase domain, thus disrupting a sequence involved in directing specific protein-protein interactions necessary for the assembly of signaling complexes. Also cleaves mouse Nlrp1b: host Nlrp1b cleavage promotes ubiquitination and degradation of the N-terminal part of Nlrp1b by the proteasome, thereby releasing the cleaved C-terminal part of Nlrp1b, which polymerizes and forms the Nlrp1b inflammasome followed by host cell pyroptosis. Able to cleave mouse Nlrp1b alleles 1 and 5, while it is not able to cleave Nlrp1b alleles 2, 3 and 4. In contrast, does not cleave NLRP1 human ortholog. LF is not toxic by itself and only acts as a lethal factor when associated with protective antigen (PA) to form the lethal toxin (LeTx): PA is required for LF translocation into the host cytosol. The polypeptide is Lethal factor (Bacillus anthracis).